A 1072-amino-acid chain; its full sequence is Carbamoyl phosphate synthase large chain (1072 aa).

Residues 1-401 are carboxyphosphate synthetic domain; sequence MPKRLDINTI…SLLKAVRSLE (401 aa). Positions 129, 169, 175, 176, 208, 210, 215, 241, 242, 243, 284, and 298 each coordinate ATP. One can recognise an ATP-grasp 1 domain in the interval 133–327; the sequence is RTLMQDLNEP…IAKLAAKIAV (195 aa). Residues Gln-284, Glu-298, and Asn-300 each coordinate Mg(2+). Mn(2+) contacts are provided by Gln-284, Glu-298, and Asn-300. Residues 402 to 546 form an oligomerization domain region; sequence LGIYHLELDH…YSTYAEENES (145 aa). The carbamoyl phosphate synthetic domain stretch occupies residues 547–929; the sequence is IVTDRKSVVV…ALYKGLVASG (383 aa). An ATP-grasp 2 domain is found at 671 to 861; that stretch reads EAALTKLGIP…MANVATKVIL (191 aa). ATP-binding residues include Arg-707, Arg-746, Glu-752, Gly-777, Val-778, His-779, Ser-780, Gln-820, and Glu-832. Mg(2+)-binding residues include Gln-820, Glu-832, and Asn-834. The Mn(2+) site is built by Gln-820, Glu-832, and Asn-834. An MGS-like domain is found at 930–1072; the sequence is INIPTHGSVI…QTKRHEVVHA (143 aa). The interval 930-1072 is allosteric domain; the sequence is INIPTHGSVI…QTKRHEVVHA (143 aa).

Belongs to the CarB family. As to quaternary structure, composed of two chains; the small (or glutamine) chain promotes the hydrolysis of glutamine to ammonia, which is used by the large (or ammonia) chain to synthesize carbamoyl phosphate. Tetramer of heterodimers (alpha,beta)4. Mg(2+) serves as cofactor. It depends on Mn(2+) as a cofactor.

The enzyme catalyses hydrogencarbonate + L-glutamine + 2 ATP + H2O = carbamoyl phosphate + L-glutamate + 2 ADP + phosphate + 2 H(+). It carries out the reaction hydrogencarbonate + NH4(+) + 2 ATP = carbamoyl phosphate + 2 ADP + phosphate + 2 H(+). Its pathway is amino-acid biosynthesis; L-arginine biosynthesis; carbamoyl phosphate from bicarbonate: step 1/1. It functions in the pathway pyrimidine metabolism; UMP biosynthesis via de novo pathway; (S)-dihydroorotate from bicarbonate: step 1/3. Large subunit of the glutamine-dependent carbamoyl phosphate synthetase (CPSase). CPSase catalyzes the formation of carbamoyl phosphate from the ammonia moiety of glutamine, carbonate, and phosphate donated by ATP, constituting the first step of 2 biosynthetic pathways, one leading to arginine and/or urea and the other to pyrimidine nucleotides. The large subunit (synthetase) binds the substrates ammonia (free or transferred from glutamine from the small subunit), hydrogencarbonate and ATP and carries out an ATP-coupled ligase reaction, activating hydrogencarbonate by forming carboxy phosphate which reacts with ammonia to form carbamoyl phosphate. The chain is Carbamoyl phosphate synthase large chain from Bacillus cereus (strain ATCC 10987 / NRS 248).